Here is a 207-residue protein sequence, read N- to C-terminus: Alpha/beta-tubulin-N-acetyltransferase 9 (207 aa).

The 146-residue stretch at 35-180 folds into the N-acetyltransferase domain; the sequence is EELQRLTASE…QEVTLRLTVS (146 aa).

It belongs to the acetyltransferase family. GNAT subfamily.

It catalyses the reaction N-terminal L-methionyl-[tubulin] + acetyl-CoA = N-terminal N(alpha)-acetyl-L-methionyl-[tubulin] + CoA + H(+). N-acetyltransferase that mediates the acetylation of the N-terminal residues of alpha- and beta-tubulin. The protein is Alpha/beta-tubulin-N-acetyltransferase 9 (NAT9) of Homo sapiens (Human).